The following is a 168-amino-acid chain: Crossover junction endodeoxyribonuclease RuvC (168 aa).

Catalysis depends on residues aspartate 11, glutamate 71, and aspartate 144. Aspartate 11, glutamate 71, and aspartate 144 together coordinate Mg(2+).

This sequence belongs to the RuvC family. In terms of assembly, homodimer which binds Holliday junction (HJ) DNA. The HJ becomes 2-fold symmetrical on binding to RuvC with unstacked arms; it has a different conformation from HJ DNA in complex with RuvA. In the full resolvosome a probable DNA-RuvA(4)-RuvB(12)-RuvC(2) complex forms which resolves the HJ. Mg(2+) is required as a cofactor.

It localises to the cytoplasm. The catalysed reaction is Endonucleolytic cleavage at a junction such as a reciprocal single-stranded crossover between two homologous DNA duplexes (Holliday junction).. In terms of biological role, the RuvA-RuvB-RuvC complex processes Holliday junction (HJ) DNA during genetic recombination and DNA repair. Endonuclease that resolves HJ intermediates. Cleaves cruciform DNA by making single-stranded nicks across the HJ at symmetrical positions within the homologous arms, yielding a 5'-phosphate and a 3'-hydroxyl group; requires a central core of homology in the junction. The consensus cleavage sequence is 5'-(A/T)TT(C/G)-3'. Cleavage occurs on the 3'-side of the TT dinucleotide at the point of strand exchange. HJ branch migration catalyzed by RuvA-RuvB allows RuvC to scan DNA until it finds its consensus sequence, where it cleaves and resolves the cruciform DNA. The polypeptide is Crossover junction endodeoxyribonuclease RuvC (Protochlamydia amoebophila (strain UWE25)).